Here is a 294-residue protein sequence, read N- to C-terminus: Cytidine deaminase (294 aa).

CMP/dCMP-type deaminase domains are found at residues 48–168 and 186–294; these read DEDA…FGPK and LTGD…VLLA. Substrate is bound at residue 89–91; the sequence is NME. His-102 provides a ligand contact to Zn(2+). The Proton donor role is filled by Glu-104. Residues Cys-129 and Cys-132 each coordinate Zn(2+).

It belongs to the cytidine and deoxycytidylate deaminase family. In terms of assembly, homodimer. The cofactor is Zn(2+).

It carries out the reaction cytidine + H2O + H(+) = uridine + NH4(+). The enzyme catalyses 2'-deoxycytidine + H2O + H(+) = 2'-deoxyuridine + NH4(+). This enzyme scavenges exogenous and endogenous cytidine and 2'-deoxycytidine for UMP synthesis. This chain is Cytidine deaminase, found in Shigella dysenteriae serotype 1 (strain Sd197).